Here is a 156-residue protein sequence, read N- to C-terminus: ATP synthase subunit b (156 aa).

The helical transmembrane segment at 12 to 32 threads the bilayer; the sequence is VAFFIFVIFCMKFVWPPVIAA.

Belongs to the ATPase B chain family. F-type ATPases have 2 components, F(1) - the catalytic core - and F(0) - the membrane proton channel. F(1) has five subunits: alpha(3), beta(3), gamma(1), delta(1), epsilon(1). F(0) has three main subunits: a(1), b(2) and c(10-14). The alpha and beta chains form an alternating ring which encloses part of the gamma chain. F(1) is attached to F(0) by a central stalk formed by the gamma and epsilon chains, while a peripheral stalk is formed by the delta and b chains.

The protein resides in the cell inner membrane. Its function is as follows. F(1)F(0) ATP synthase produces ATP from ADP in the presence of a proton or sodium gradient. F-type ATPases consist of two structural domains, F(1) containing the extramembraneous catalytic core and F(0) containing the membrane proton channel, linked together by a central stalk and a peripheral stalk. During catalysis, ATP synthesis in the catalytic domain of F(1) is coupled via a rotary mechanism of the central stalk subunits to proton translocation. Functionally, component of the F(0) channel, it forms part of the peripheral stalk, linking F(1) to F(0). The polypeptide is ATP synthase subunit b (Pseudomonas savastanoi pv. phaseolicola (strain 1448A / Race 6) (Pseudomonas syringae pv. phaseolicola (strain 1448A / Race 6))).